The sequence spans 664 residues: Glycine--tRNA ligase beta subunit (664 aa).

It belongs to the class-II aminoacyl-tRNA synthetase family. As to quaternary structure, tetramer of two alpha and two beta subunits.

The protein localises to the cytoplasm. It carries out the reaction tRNA(Gly) + glycine + ATP = glycyl-tRNA(Gly) + AMP + diphosphate. In Rickettsia typhi (strain ATCC VR-144 / Wilmington), this protein is Glycine--tRNA ligase beta subunit.